The sequence spans 264 residues: Indole-3-glycerol phosphate synthase (264 aa).

Belongs to the TrpC family.

It carries out the reaction 1-(2-carboxyphenylamino)-1-deoxy-D-ribulose 5-phosphate + H(+) = (1S,2R)-1-C-(indol-3-yl)glycerol 3-phosphate + CO2 + H2O. The protein operates within amino-acid biosynthesis; L-tryptophan biosynthesis; L-tryptophan from chorismate: step 4/5. This Carboxydothermus hydrogenoformans (strain ATCC BAA-161 / DSM 6008 / Z-2901) protein is Indole-3-glycerol phosphate synthase.